Consider the following 231-residue polypeptide: Cytidylate kinase (231 aa).

16–24 (GPAASGKST) contributes to the ATP binding site. Residues 176 to 205 (PDLDSLEQEITKRDRDDAEREHAPLKKHPE) are disordered. Basic and acidic residues predominate over residues 184 to 205 (EITKRDRDDAEREHAPLKKHPE).

Belongs to the cytidylate kinase family. Type 1 subfamily.

It localises to the cytoplasm. It carries out the reaction CMP + ATP = CDP + ADP. The catalysed reaction is dCMP + ATP = dCDP + ADP. In Pelodictyon phaeoclathratiforme (strain DSM 5477 / BU-1), this protein is Cytidylate kinase.